A 661-amino-acid chain; its full sequence is Protein WHI3 (661 aa).

The segment covering 14 to 31 has biased composition (low complexity); that stretch reads ASSSDNVVSSTTNTHNIS. A disordered region spans residues 14-58; sequence ASSSDNVVSSTTNTHNISPSHRSSLNLNTTSHPHEASGRGSASGE. Positions 32–44 are enriched in polar residues; that stretch reads PSHRSSLNLNTTS. The residue at position 231 (Ser231) is a Phosphoserine. Low complexity-rich tracts occupy residues 237 to 272, 383 to 409, and 496 to 508; these read DPFS…SPQQ, NTSA…SASS, and KNNS…SNIT. Disordered regions lie at residues 237–280, 383–410, 469–508, and 613–661; these read DPFS…QVNS, NTSA…ASSQ, EHMY…SNIT, and SSKG…HIKN. An RRM domain is found at 538–625; the sequence is NTLYVGNLPS…GGIRLSFSKN (88 aa). Over residues 628-647 the composition is skewed to low complexity; it reads GVRGPNSRRGGSGNPNPNVN. Residues 648 to 661 show a composition bias toward polar residues; that stretch reads MLSSYNSNVGHIKN.

In terms of biological role, involved in size control and cell cycle. In Saccharomyces cerevisiae (strain ATCC 204508 / S288c) (Baker's yeast), this protein is Protein WHI3 (WHI3).